The chain runs to 387 residues: Chaperone protein DnaJ (387 aa).

Positions 5-70 (DYYEVLGLQK…DKKAKYDQFG (66 aa)) constitute a J domain. Residues 144–226 (GCEKEISITR…CKGKGTVRKN (83 aa)) form a CR-type zinc finger. Zn(2+)-binding residues include C157, C160, C174, C177, C200, C203, C214, and C217. 4 CXXCXGXG motif repeats span residues 157-164 (CETCHGTG), 174-181 (CPKCNGSG), 200-207 (CDQCGGTG), and 214-221 (CPDCKGKG).

This sequence belongs to the DnaJ family. Homodimer. It depends on Zn(2+) as a cofactor.

Its subcellular location is the cytoplasm. Its function is as follows. Participates actively in the response to hyperosmotic and heat shock by preventing the aggregation of stress-denatured proteins and by disaggregating proteins, also in an autonomous, DnaK-independent fashion. Unfolded proteins bind initially to DnaJ; upon interaction with the DnaJ-bound protein, DnaK hydrolyzes its bound ATP, resulting in the formation of a stable complex. GrpE releases ADP from DnaK; ATP binding to DnaK triggers the release of the substrate protein, thus completing the reaction cycle. Several rounds of ATP-dependent interactions between DnaJ, DnaK and GrpE are required for fully efficient folding. Also involved, together with DnaK and GrpE, in the DNA replication of plasmids through activation of initiation proteins. This chain is Chaperone protein DnaJ, found in Clostridium perfringens (strain 13 / Type A).